A 289-amino-acid polypeptide reads, in one-letter code: Phycobilisome 39 kDa linker polypeptide, phycocyanin-associated, rod (289 aa).

Positions 2–180 (PITSAASRLG…LYRGYANSDR (179 aa)) constitute a PBS-linker domain. A disordered region spans residues 213–233 (SYLPSKQGTAPSRTFGRSSQG). The span at 216–233 (PSKQGTAPSRTFGRSSQG) shows a compositional bias: polar residues. The CpcD-like domain occupies 236 to 288 (PRLYRIEVTGISLPRYPKVRRSNKEFIVPYEQLSSTLQQINKLGGKVASITFA).

The protein belongs to the phycobilisome linker protein family.

Its subcellular location is the cellular thylakoid membrane. Rod linker protein, associated with phycocyanin. Linker polypeptides determine the state of aggregation and the location of the disk-shaped phycobiliprotein units within the phycobilisome and modulate their spectroscopic properties in order to mediate a directed and optimal energy transfer. In Microchaete diplosiphon (Fremyella diplosiphon), this protein is Phycobilisome 39 kDa linker polypeptide, phycocyanin-associated, rod (cpcI2).